Reading from the N-terminus, the 235-residue chain is Elongation factor Tu, chloroplastic (235 aa).

The region spanning 1–125 (KNMITGAAQM…EVDNYIPLPT (125 aa)) is the tr-type G domain. 47–50 (NKAD) is a binding site for GTP.

Belongs to the TRAFAC class translation factor GTPase superfamily. Classic translation factor GTPase family. EF-Tu/EF-1A subfamily.

It is found in the plastid. The protein resides in the chloroplast. The catalysed reaction is GTP + H2O = GDP + phosphate + H(+). Functionally, GTP hydrolase that promotes the GTP-dependent binding of aminoacyl-tRNA to the A-site of ribosomes during protein biosynthesis. In Bryopsis plumosa (Green alga), this protein is Elongation factor Tu, chloroplastic (tufA).